The chain runs to 348 residues: uncharacterized protein (348 aa).

In terms of biological role, may be involved in apoptosis regulation. This is an uncharacterized protein from Rattus norvegicus (Rat).